The following is a 572-amino-acid chain: E3 ubiquitin-protein ligase ZFP91 (572 aa).

The segment covering 1-12 has biased composition (basic and acidic residues); the sequence is MPGETEEPRSPE. The interval 1 to 308 is disordered; it reads MPGETEEPRS…PRLPKRRKKP (308 aa). Low complexity predominate over residues 61 to 70; it reads AAAAAAAAAA. The span at 72–85 shows a compositional bias: basic residues; sequence SRRRKAEYPRRRRS. 2 positions are modified to phosphoserine: S86 and S106. Residues 122 to 131 show a composition bias toward basic and acidic residues; the sequence is LTTDKDPKEE. Positions 143–162 are enriched in low complexity; that stretch reads SITTTRASRSWRSSSRTSIS. Residues 209–225 are compositionally biased toward acidic residues; the sequence is SDEEEEEEEEMLISEEE. Basic and acidic residues-rich tracts occupy residues 226–247 and 254–271; these read IPFKDDPRDETYKPHLERETPK and KVKEEKEKKEIKVEVEVE. Positions 272–284 are enriched in acidic residues; it reads VKEEENEIREDEE. 5 consecutive C2H2-type zinc fingers follow at residues 313–338, 344–368, 374–396, 402–424, and 432–455; these read VRCEMEGCGTVLAHPRYLQHHIKYQH, YVCPHPSCGRLFRLQKQLLRHAKHH, YICEYCARAFKSSHNLAVHRMIH, LQCEICGFTCRQKASLNWHMKKH, and FSCNICGKKFEKKDSVVAHKAKSH. The tract at residues 340-370 is interaction with MAP3K14/NIK; it reads LKKKYVCPHPSCGRLFRLQKQLLRHAKHHTD.

Belongs to the krueppel C2H2-type zinc-finger protein family. In terms of assembly, interacts with MAP3K14/NIK. Found in all the examined tissues including brain, heart, kidney, lung, liver, spleen, thymus, skeletal muscle, ovary and testis.

It localises to the nucleus. It carries out the reaction S-ubiquitinyl-[E2 ubiquitin-conjugating enzyme]-L-cysteine + [acceptor protein]-L-lysine = [E2 ubiquitin-conjugating enzyme]-L-cysteine + N(6)-ubiquitinyl-[acceptor protein]-L-lysine.. It participates in protein modification; protein ubiquitination. Functionally, atypical E3 ubiquitin-protein ligase that mediates 'Lys-63'-linked ubiquitination of MAP3K14/NIK, leading to stabilize and activate MAP3K14/NIK. It thereby acts as an activator of the non-canonical NF-kappa-B2/NFKB2 pathway. May also play an important role in cell proliferation and/or anti-apoptosis. The chain is E3 ubiquitin-protein ligase ZFP91 (Zfp91) from Mus musculus (Mouse).